The following is a 402-amino-acid chain: S-adenosylmethionine synthase (402 aa).

An ATP-binding site is contributed by 137–142; sequence GQGSAD.

It belongs to the AdoMet synthase 2 family. Mg(2+) serves as cofactor.

The enzyme catalyses L-methionine + ATP + H2O = S-adenosyl-L-methionine + phosphate + diphosphate. It functions in the pathway amino-acid biosynthesis; S-adenosyl-L-methionine biosynthesis; S-adenosyl-L-methionine from L-methionine: step 1/1. Its function is as follows. Catalyzes the formation of S-adenosylmethionine from methionine and ATP. This is S-adenosylmethionine synthase from Pyrobaculum islandicum (strain DSM 4184 / JCM 9189 / GEO3).